Consider the following 117-residue polypeptide: Large ribosomal subunit protein uL18 (117 aa).

Belongs to the universal ribosomal protein uL18 family. As to quaternary structure, part of the 50S ribosomal subunit; part of the 5S rRNA/L5/L18/L25 subcomplex. Contacts the 5S and 23S rRNAs.

Its function is as follows. This is one of the proteins that bind and probably mediate the attachment of the 5S RNA into the large ribosomal subunit, where it forms part of the central protuberance. The protein is Large ribosomal subunit protein uL18 of Aliivibrio salmonicida (strain LFI1238) (Vibrio salmonicida (strain LFI1238)).